Consider the following 245-residue polypeptide: MIIPAIDLIDGKVVRLYQGDYGQKTEYSADPQGRFDDYVAQGATQLHLVDLDGAKDSTKRQLTVIRKLLANTKAPVQIGGGVRTEQDVKDLLDAGANRVVIGSTAVKDPVTVAGWVEKYGADKIVLALDVNIDAEGNRKIAVAGWQEDSGVTIEALLAHYLPVGLKHVLCTDISRDGTLQGSNVALYRDLAAQFPQINWQASGGIGGIADIEALKGSGVGGVILGRSLLEGKFTVKEAIACWQDA.

Aspartate 7 functions as the Proton acceptor in the catalytic mechanism. The Proton donor role is filled by aspartate 129.

Belongs to the HisA/HisF family.

The protein resides in the cytoplasm. It carries out the reaction 1-(5-phospho-beta-D-ribosyl)-5-[(5-phospho-beta-D-ribosylamino)methylideneamino]imidazole-4-carboxamide = 5-[(5-phospho-1-deoxy-D-ribulos-1-ylimino)methylamino]-1-(5-phospho-beta-D-ribosyl)imidazole-4-carboxamide. It participates in amino-acid biosynthesis; L-histidine biosynthesis; L-histidine from 5-phospho-alpha-D-ribose 1-diphosphate: step 4/9. This is 1-(5-phosphoribosyl)-5-[(5-phosphoribosylamino)methylideneamino] imidazole-4-carboxamide isomerase from Tolumonas auensis (strain DSM 9187 / NBRC 110442 / TA 4).